Consider the following 313-residue polypeptide: Fructose-1,6-bisphosphatase class 1 (313 aa).

Residues glutamate 91, aspartate 112, leucine 114, and aspartate 115 each contribute to the Mg(2+) site. Residues 115–118 (DGSS), tyrosine 223, and lysine 254 contribute to the substrate site. Glutamate 260 is a Mg(2+) binding site.

It belongs to the FBPase class 1 family. In terms of assembly, homotetramer. Requires Mg(2+) as cofactor.

The protein localises to the cytoplasm. The enzyme catalyses beta-D-fructose 1,6-bisphosphate + H2O = beta-D-fructose 6-phosphate + phosphate. It functions in the pathway carbohydrate biosynthesis; gluconeogenesis. This is Fructose-1,6-bisphosphatase class 1 from Geobacter sulfurreducens (strain ATCC 51573 / DSM 12127 / PCA).